The sequence spans 151 residues: Small ribosomal subunit protein uS9 (151 aa).

Belongs to the universal ribosomal protein uS9 family.

The polypeptide is Small ribosomal subunit protein uS9 (rps9) (Aeropyrum pernix (strain ATCC 700893 / DSM 11879 / JCM 9820 / NBRC 100138 / K1)).